A 530-amino-acid polypeptide reads, in one-letter code: Bifunctional purine biosynthesis protein PurH (530 aa).

In terms of domain architecture, MGS-like spans 1 to 148; that stretch reads MEQARPIRRA…KNHKDVAIVV (148 aa).

Belongs to the PurH family.

The enzyme catalyses (6R)-10-formyltetrahydrofolate + 5-amino-1-(5-phospho-beta-D-ribosyl)imidazole-4-carboxamide = 5-formamido-1-(5-phospho-D-ribosyl)imidazole-4-carboxamide + (6S)-5,6,7,8-tetrahydrofolate. It carries out the reaction IMP + H2O = 5-formamido-1-(5-phospho-D-ribosyl)imidazole-4-carboxamide. The protein operates within purine metabolism; IMP biosynthesis via de novo pathway; 5-formamido-1-(5-phospho-D-ribosyl)imidazole-4-carboxamide from 5-amino-1-(5-phospho-D-ribosyl)imidazole-4-carboxamide (10-formyl THF route): step 1/1. It participates in purine metabolism; IMP biosynthesis via de novo pathway; IMP from 5-formamido-1-(5-phospho-D-ribosyl)imidazole-4-carboxamide: step 1/1. This chain is Bifunctional purine biosynthesis protein PurH, found in Aeromonas salmonicida (strain A449).